Here is a 211-residue protein sequence, read N- to C-terminus: Adenylate kinase (211 aa).

Residue 10–15 (GSGKGT) coordinates ATP. The interval 30–59 (STGDLFRENILNSTALGQEIKKIVERGELV) is NMP. AMP-binding positions include Thr31, Arg36, 57-59 (ELV), 85-88 (GFPR), and Gln92. Residues 121-158 (GRRICKSCNNIFNIYTLTTKKNGICDVCGGDLYQREDD) are LID. Arg122 contacts ATP. Positions 125 and 128 each coordinate Zn(2+). Residue 131–132 (IF) coordinates ATP. Residues Cys145 and Cys148 each coordinate Zn(2+). Residues Arg155 and Arg166 each contribute to the AMP site. An ATP-binding site is contributed by Val194.

This sequence belongs to the adenylate kinase family. Monomer.

The protein localises to the cytoplasm. The catalysed reaction is AMP + ATP = 2 ADP. The protein operates within purine metabolism; AMP biosynthesis via salvage pathway; AMP from ADP: step 1/1. In terms of biological role, catalyzes the reversible transfer of the terminal phosphate group between ATP and AMP. Plays an important role in cellular energy homeostasis and in adenine nucleotide metabolism. The sequence is that of Adenylate kinase from Borreliella burgdorferi (strain ATCC 35210 / DSM 4680 / CIP 102532 / B31) (Borrelia burgdorferi).